A 324-amino-acid polypeptide reads, in one-letter code: Serpentine receptor class delta-30 (324 aa).

Helical transmembrane passes span 5–25 (IIHS…MYLA), 38–58 (AIIT…FFVM), 83–103 (ACYV…IWMI), 124–144 (VFVA…WFSF), 176–196 (ITLI…YIWI), 227–247 (FQVF…SMFT), and 258–278 (AISV…ILFV). Positions 290–324 (KQPKPHPEMCGPIRSNTRTTSISVTNNSSHLSSAH) are disordered. The segment covering 303–324 (RSNTRTTSISVTNNSSHLSSAH) has biased composition (polar residues).

It belongs to the nematode receptor-like protein srd family.

The protein localises to the membrane. The protein is Serpentine receptor class delta-30 (srd-30) of Caenorhabditis elegans.